Here is a 394-residue protein sequence, read N- to C-terminus: A-type flagellin (394 aa).

Belongs to the bacterial flagellin family. In terms of processing, phosphorylated on tyrosine residue(s). Flagellin from strain 5939 but not from strain 170018 is glycosylated.

The protein localises to the secreted. Its subcellular location is the bacterial flagellum. Its function is as follows. Flagellin is the subunit protein which polymerizes to form the filaments of bacterial flagella. In Pseudomonas aeruginosa, this protein is A-type flagellin (fliC).